We begin with the raw amino-acid sequence, 102 residues long: Citrate lyase acyl carrier protein (102 aa).

Serine 14 bears the O-(phosphoribosyl dephospho-coenzyme A)serine mark.

Belongs to the CitD family. In terms of assembly, oligomer with a subunit composition of (alpha,beta,gamma)6.

The protein localises to the cytoplasm. In terms of biological role, covalent carrier of the coenzyme of citrate lyase. This Streptococcus pyogenes serotype M4 (strain MGAS10750) protein is Citrate lyase acyl carrier protein.